Consider the following 153-residue polypeptide: Actin-related protein 2/3 complex subunit 5-like protein (153 aa).

Serine 64 carries the post-translational modification Phosphoserine.

Belongs to the ARPC5 family. As to quaternary structure, may be a component of the Arp2/3 complex in which it may replace ARPC5.

It localises to the cytoplasm. The protein resides in the cytoskeleton. Its subcellular location is the cell projection. Its function is as follows. May function as component of the Arp2/3 complex which is involved in regulation of actin polymerization and together with an activating nucleation-promoting factor (NPF) mediates the formation of branched actin networks. The polypeptide is Actin-related protein 2/3 complex subunit 5-like protein (ARPC5L) (Bos taurus (Bovine)).